An 85-amino-acid polypeptide reads, in one-letter code: Large ribosomal subunit protein bL27 (85 aa).

The interval 1–20 (MATKKAGGSTRNGRDSEAKR) is disordered.

The protein belongs to the bacterial ribosomal protein bL27 family.

This is Large ribosomal subunit protein bL27 from Haemophilus influenzae (strain PittEE).